We begin with the raw amino-acid sequence, 127 residues long: Vacuolar ATPase assembly integral membrane protein VMA21 (127 aa).

Residues 1 to 28 (MATRRNPTKESITTSPPPDQQPRQPGEL) are disordered. The Cytoplasmic segment spans residues 1 to 45 (MATRRNPTKESITTSPPPDQQPRQPGELEHREAIQLRDLPGYPQQ). The helical transmembrane segment at 46–66 (VLWKLIIYSIAVLVLPLSAYF) threads the bilayer. The Lumenal segment spans residues 67–79 (YSVNYVFDGNTTY). A helical transmembrane segment spans residues 80–100 (AGATAAITANLILFSYIVVAM). At 101–127 (REDKGDQEQLREQQQLRGNKEETKKMK) the chain is on the cytoplasmic side. The interval 107-127 (QEQLREQQQLRGNKEETKKMK) is disordered. Over residues 118–127 (GNKEETKKMK) the composition is skewed to basic and acidic residues. Positions 124-127 (KKMK) match the Prevents secretion from ER motif.

The protein belongs to the VMA21 family.

The protein localises to the endoplasmic reticulum membrane. Its subcellular location is the endoplasmic reticulum-Golgi intermediate compartment membrane. It localises to the cytoplasmic vesicle. The protein resides in the COPII-coated vesicle membrane. Required for the assembly of the V0 complex of the vacuolar ATPase (V-ATPase) in the endoplasmic reticulum. The protein is Vacuolar ATPase assembly integral membrane protein VMA21 of Coccidioides immitis (strain RS) (Valley fever fungus).